Reading from the N-terminus, the 147-residue chain is Protegrin-2 (147 aa).

The first 29 residues, 1–29, serve as a signal peptide directing secretion; the sequence is METQRASLCLGRWSLWLLLLALVVPSASA. The propeptide occupies 30–130; that stretch reads QALSYREAVL…DITCNEVQGV (101 aa). Residues 61–80 form a disordered region; that stretch reads DQPPKADEDPGTPKPVSFTV. 4 disulfides stabilise this stretch: C85–C96, C107–C124, C136–C145, and C138–C143. V146 bears the Valine amide mark.

This sequence belongs to the cathelicidin family.

The protein resides in the secreted. In terms of biological role, microbicidal activity. Active against E.coli, Listeria monocytogenes and C.albicans, in vitro. The protein is Protegrin-2 (NPG2) of Sus scrofa (Pig).